The sequence spans 375 residues: MTNAESRTVLRILDANANRAGEGLRTLEESARFILNDLSLTERLKTHRHDLAVAMRRWNRFQLIGSRDTPGDVGTGVQTASEQSRADLSSVIAAATTRTQQALRCLEEYGKTADSEFAACIESIRYQCYATFRELELKMAGLNARSRKLVEARLYALIACEPNADYLKARIAELVDAGVDVIQLRDSSVDDRTLFEQAKLGAAIAAERDVLWIINDRADIAVASGADGVHVGQEELPVDAVREVVGPERLIGLSTHSIEQVRLATRTTANYIGCGPTFPGKTKSFDRYPGCEFLTQVSDAERSGELTLPAFAIGGIGLGNVEQVAQSGIGRVAVTGALAPHDGLHQTAMGMREILERVPLRITPDSSDVCPLPND.

The interval 1–127 (MTNAESRTVL…AACIESIRYQ (127 aa)) is unknown. The segment at 128 to 375 (CYATFRELEL…SSDVCPLPND (248 aa)) is thiamine-phosphate synthase. 4-amino-2-methyl-5-(diphosphooxymethyl)pyrimidine-binding positions include 183-185 (QLR) and Asn215. Residues Asp216 and Glu235 each coordinate Mg(2+). Residues Ser254 and Lys283 each contribute to the 4-amino-2-methyl-5-(diphosphooxymethyl)pyrimidine site. Residue Gly315 coordinates 2-[(2R,5Z)-2-carboxy-4-methylthiazol-5(2H)-ylidene]ethyl phosphate.

The protein belongs to the thiamine-phosphate synthase family. Mg(2+) serves as cofactor.

It catalyses the reaction 2-[(2R,5Z)-2-carboxy-4-methylthiazol-5(2H)-ylidene]ethyl phosphate + 4-amino-2-methyl-5-(diphosphooxymethyl)pyrimidine + 2 H(+) = thiamine phosphate + CO2 + diphosphate. The enzyme catalyses 2-(2-carboxy-4-methylthiazol-5-yl)ethyl phosphate + 4-amino-2-methyl-5-(diphosphooxymethyl)pyrimidine + 2 H(+) = thiamine phosphate + CO2 + diphosphate. The catalysed reaction is 4-methyl-5-(2-phosphooxyethyl)-thiazole + 4-amino-2-methyl-5-(diphosphooxymethyl)pyrimidine + H(+) = thiamine phosphate + diphosphate. The protein operates within cofactor biosynthesis; thiamine diphosphate biosynthesis; thiamine phosphate from 4-amino-2-methyl-5-diphosphomethylpyrimidine and 4-methyl-5-(2-phosphoethyl)-thiazole: step 1/1. Condenses 4-methyl-5-(beta-hydroxyethyl)thiazole monophosphate (THZ-P) and 2-methyl-4-amino-5-hydroxymethyl pyrimidine pyrophosphate (HMP-PP) to form thiamine monophosphate (TMP). The polypeptide is Thiamine-phosphate synthase (thiE) (Rhodopirellula baltica (strain DSM 10527 / NCIMB 13988 / SH1)).